Here is a 359-residue protein sequence, read N- to C-terminus: Chorismate synthase (359 aa).

Arg47 provides a ligand contact to NADP(+). FMN-binding positions include 123–125 (RSS), Gly283, 298–302 (KPTSS), and Arg326.

This sequence belongs to the chorismate synthase family. Homotetramer. The cofactor is FMNH2.

The catalysed reaction is 5-O-(1-carboxyvinyl)-3-phosphoshikimate = chorismate + phosphate. The protein operates within metabolic intermediate biosynthesis; chorismate biosynthesis; chorismate from D-erythrose 4-phosphate and phosphoenolpyruvate: step 7/7. Catalyzes the anti-1,4-elimination of the C-3 phosphate and the C-6 proR hydrogen from 5-enolpyruvylshikimate-3-phosphate (EPSP) to yield chorismate, which is the branch point compound that serves as the starting substrate for the three terminal pathways of aromatic amino acid biosynthesis. This reaction introduces a second double bond into the aromatic ring system. In Chlamydia felis (strain Fe/C-56) (Chlamydophila felis), this protein is Chorismate synthase.